A 141-amino-acid polypeptide reads, in one-letter code: Large ribosomal subunit protein uL16c (141 aa).

Positions 1–17 (MLSPKRTKYRKPHRGNR) are enriched in basic residues. Positions 1-21 (MLSPKRTKYRKPHRGNRKGQA) are disordered.

This sequence belongs to the universal ribosomal protein uL16 family. As to quaternary structure, part of the 50S ribosomal subunit.

The protein localises to the plastid. It is found in the chloroplast. The protein is Large ribosomal subunit protein uL16c of Ostreococcus tauri.